Consider the following 393-residue polypeptide: Lipid-A-disaccharide synthase (393 aa).

This sequence belongs to the LpxB family.

The enzyme catalyses a lipid X + a UDP-2-N,3-O-bis[(3R)-3-hydroxyacyl]-alpha-D-glucosamine = a lipid A disaccharide + UDP + H(+). Its pathway is bacterial outer membrane biogenesis; LPS lipid A biosynthesis. Functionally, condensation of UDP-2,3-diacylglucosamine and 2,3-diacylglucosamine-1-phosphate to form lipid A disaccharide, a precursor of lipid A, a phosphorylated glycolipid that anchors the lipopolysaccharide to the outer membrane of the cell. This chain is Lipid-A-disaccharide synthase, found in Actinobacillus pleuropneumoniae serotype 5b (strain L20).